The following is a 33-amino-acid chain: Photosystem II reaction center protein Psb30 (33 aa).

Residues 5–25 form a helical membrane-spanning segment; the sequence is LIVQLTSLALITLAGPLIVAL.

The protein belongs to the Psb30/Ycf12 family. In terms of assembly, PSII is composed of 1 copy each of membrane proteins PsbA, PsbB, PsbC, PsbD, PsbE, PsbF, PsbH, PsbI, PsbJ, PsbK, PsbL, PsbM, PsbT, PsbY, PsbZ, Psb30/Ycf12, peripheral proteins of the oxygen-evolving complex and a large number of cofactors. It forms dimeric complexes.

It localises to the plastid. The protein localises to the chloroplast thylakoid membrane. A core subunit of photosystem II (PSII), probably helps stabilize the reaction center. The chain is Photosystem II reaction center protein Psb30 from Euglena sanguinea.